The following is a 220-amino-acid chain: Photosynthetic NDH subunit of lumenal location 3, chloroplastic (220 aa).

Residues 1-35 constitute a chloroplast transit peptide; the sequence is MAHFIDLNSLTNTLPSLPKLPESRKTGKSSGFACR. The N-terminal 42 residues, 36–77, are a transit peptide targeting the thylakoid; it reads RTEEFQEPDSVQITRRMTLGFAVSIGLTGILGENNVSLAQDN.

Belongs to the PsbQ family. As to quaternary structure, part of the chloroplast NDH complex, composed of a mixture of chloroplast and nucleus encoded subunits. Component of the NDH lumenal subcomplex, at least composed of PnsL1, PnsL2, PnsL3, PnsL4 and PnsL5.

Its subcellular location is the plastid. It localises to the chloroplast thylakoid membrane. NDH shuttles electrons from NAD(P)H:plastoquinone, via FMN and iron-sulfur (Fe-S) centers, to quinones in the photosynthetic chain and possibly in a chloroplast respiratory chain. The immediate electron acceptor for the enzyme in this species is believed to be plastoquinone. Couples the redox reaction to proton translocation, and thus conserves the redox energy in a proton gradient. Required for both formation and activity of the chloroplast NAD(P)H dehydrogenase (NDH) complex. This is Photosynthetic NDH subunit of lumenal location 3, chloroplastic from Arabidopsis thaliana (Mouse-ear cress).